A 260-amino-acid chain; its full sequence is MFDIGVNLTSVQFAKDYHQVVNRAKEAGVLGILITGTDADESLAAQTLAAEYPGYCWSTTGVHPHHASSWQDSVEQKIRTLAATASVVAIGECGLDFNRNFSTPAQQEVAFTAQLALAAELSLPVFLHCRDAHERFIDLLVPWLDKIPAAVVHCFTGNSDELDACLALGLSIGITGWVCDERRGLDLRALLPRIPVQQLLLETDAPYLLPRDLNPKPASRRNEPCFLPHIVQQVAAWRQEDPNWLGQKTDENARRVFRLV.

Glu92, His128, and His153 together coordinate a divalent metal cation.

Belongs to the metallo-dependent hydrolases superfamily. TatD-type hydrolase family. TatD subfamily. As to quaternary structure, monomer. Mg(2+) serves as cofactor.

It localises to the cytoplasm. 3'-5' exonuclease that prefers single-stranded DNA and RNA. May play a role in the H(2)O(2)-induced DNA damage repair. The protein is 3'-5' ssDNA/RNA exonuclease TatD of Yersinia pseudotuberculosis serotype O:3 (strain YPIII).